The chain runs to 398 residues: Elongation factor Tu (398 aa).

Residues 10 to 207 (KPHVNIGTIG…TVDEYIPEPE (198 aa)) enclose the tr-type G domain. Residues 19 to 26 (GHVDHGKT) are G1. Residue 19–26 (GHVDHGKT) participates in GTP binding. Thr-26 contributes to the Mg(2+) binding site. A G2 region spans residues 63–67 (GITIN). Positions 84–87 (DAPG) are G3. Residues 84-88 (DAPGH) and 139-142 (NKVD) each bind GTP. A G4 region spans residues 139-142 (NKVD). The interval 177-179 (SAL) is G5.

Belongs to the TRAFAC class translation factor GTPase superfamily. Classic translation factor GTPase family. EF-Tu/EF-1A subfamily. As to quaternary structure, monomer.

The protein localises to the cytoplasm. It carries out the reaction GTP + H2O = GDP + phosphate + H(+). Its function is as follows. GTP hydrolase that promotes the GTP-dependent binding of aminoacyl-tRNA to the A-site of ribosomes during protein biosynthesis. The polypeptide is Elongation factor Tu (Streptococcus thermophilus (strain CNRZ 1066)).